We begin with the raw amino-acid sequence, 201 residues long: FMN-dependent NADH:quinone oxidoreductase (201 aa).

FMN contacts are provided by residues Ser-10, 16-18 (SQS), 96-99 (MYNF), and 140-143 (SRGG).

The protein belongs to the azoreductase type 1 family. As to quaternary structure, homodimer. Requires FMN as cofactor.

It carries out the reaction 2 a quinone + NADH + H(+) = 2 a 1,4-benzosemiquinone + NAD(+). The enzyme catalyses N,N-dimethyl-1,4-phenylenediamine + anthranilate + 2 NAD(+) = 2-(4-dimethylaminophenyl)diazenylbenzoate + 2 NADH + 2 H(+). Quinone reductase that provides resistance to thiol-specific stress caused by electrophilic quinones. Functionally, also exhibits azoreductase activity. Catalyzes the reductive cleavage of the azo bond in aromatic azo compounds to the corresponding amines. The protein is FMN-dependent NADH:quinone oxidoreductase of Escherichia coli O9:H4 (strain HS).